A 64-amino-acid polypeptide reads, in one-letter code: Orcokinin peptides (64 aa).

Propeptides lie at residues 1–6 (MNIRPG) and 23–24 (NI).

This sequence belongs to the orcokinin family. As to expression, orcokinin-3 is expressed throughout the central nervous system (at protein level).

The protein localises to the secreted. Functionally, myotropic peptides. The chain is Orcokinin peptides from Camponotus floridanus (Florida carpenter ant).